Consider the following 230-residue polypeptide: 2,3-bisphosphoglycerate-dependent phosphoglycerate mutase (230 aa).

Residues 8–15 (RHGESEWN), 21–22 (TG), R60, 87–90 (ERHY), K98, 114–115 (RR), and 183–184 (GN) each bind substrate. The active-site Tele-phosphohistidine intermediate is H9. The Proton donor/acceptor role is filled by E87.

Belongs to the phosphoglycerate mutase family. BPG-dependent PGAM subfamily.

It carries out the reaction (2R)-2-phosphoglycerate = (2R)-3-phosphoglycerate. Its pathway is carbohydrate degradation; glycolysis; pyruvate from D-glyceraldehyde 3-phosphate: step 3/5. Catalyzes the interconversion of 2-phosphoglycerate and 3-phosphoglycerate. This Streptococcus pneumoniae (strain P1031) protein is 2,3-bisphosphoglycerate-dependent phosphoglycerate mutase.